Here is a 1221-residue protein sequence, read N- to C-terminus: Phosphoenolpyruvate carboxylase 2 (1221 aa).

The active site involves His-156. 2 disordered regions span residues 443–588 (TAAE…DPTF) and 642–661 (REPA…GGGG). Low complexity-rich tracts occupy residues 503-513 (TTTATAAAAAA) and 550-564 (PFRE…TAAS). 2 stretches are compositionally biased toward gly residues: residues 565-575 (GGAGGGGGGGA) and 648-661 (AHGG…GGGG). The active site involves Lys-886.

It belongs to the PEPCase type 1 family. Mg(2+) is required as a cofactor.

Its subcellular location is the cytoplasm. The catalysed reaction is oxaloacetate + phosphate = phosphoenolpyruvate + hydrogencarbonate. Its function is as follows. Through the carboxylation of phosphoenolpyruvate (PEP) it forms oxaloacetate, a four-carbon dicarboxylic acid source for the tricarboxylic acid cycle. The sequence is that of Phosphoenolpyruvate carboxylase 2 from Chlamydomonas reinhardtii (Chlamydomonas smithii).